The sequence spans 318 residues: Melanoma-associated antigen 8 (318 aa).

The interval 1–103 is disordered; sequence MLLGQKSQRY…GPSTSPDPAH (103 aa). In terms of domain architecture, MAGE spans 112–311; that stretch reads LDEKVAELVR…ISYPSLHEEA (200 aa).

In terms of tissue distribution, expressed in many tumors of several types, such as melanoma, head and neck squamous cell carcinoma, lung carcinoma and breast carcinoma, but not in normal tissues except for testis and placenta.

Functionally, not known, though may play a role in embryonal development and tumor transformation or aspects of tumor progression. The chain is Melanoma-associated antigen 8 (MAGEA8) from Homo sapiens (Human).